The primary structure comprises 67 residues: DNA-directed RNA polymerase subunit omega (67 aa).

This sequence belongs to the RNA polymerase subunit omega family. The RNAP catalytic core consists of 2 alpha, 1 beta, 1 beta' and 1 omega subunit. When a sigma factor is associated with the core the holoenzyme is formed, which can initiate transcription.

It catalyses the reaction RNA(n) + a ribonucleoside 5'-triphosphate = RNA(n+1) + diphosphate. Its function is as follows. Promotes RNA polymerase assembly. Latches the N- and C-terminal regions of the beta' subunit thereby facilitating its interaction with the beta and alpha subunits. This is DNA-directed RNA polymerase subunit omega from Leptothrix cholodnii (strain ATCC 51168 / LMG 8142 / SP-6) (Leptothrix discophora (strain SP-6)).